An 88-amino-acid polypeptide reads, in one-letter code: ATP synthase subunit 9, mitochondrial (88 aa).

The next 2 helical transmembrane spans lie at 8–28 (IGAG…GNVF) and 45–72 (LFGY…LILF).

It belongs to the ATPase C chain family. In terms of assembly, F-type ATPases have 2 components, CF(1) - the catalytic core - and CF(0) - the membrane proton channel. CF(1) has five subunits: alpha(3), beta(3), gamma(1), delta(1), epsilon(1). CF(0) has three main subunits: a, b and c.

The protein localises to the mitochondrion membrane. The catalysed reaction is ATP + H2O + 4 H(+)(in) = ADP + phosphate + 5 H(+)(out). Its function is as follows. This protein is one of the chains of the nonenzymatic membrane component (F0) of mitochondrial ATPase. The protein is ATP synthase subunit 9, mitochondrial (ATP9) of Beta vulgaris (Sugar beet).